Consider the following 1405-residue polypeptide: Protein crumbs homolog 1 (1405 aa).

A signal peptide spans 1 to 27; it reads MKLKRTAYLLFLYLSSSLLICIKNSFC. Residues 28-1339 are Extracellular-facing; sequence NKNNTRCLSG…RCELDLADDR (1312 aa). An EGF-like 1; atypical domain is found at 30 to 67; it reads NNTRCLSGPCQNNSTCKHFPQDNNCCLDTANNLDKDCE. Disulfide bonds link cysteine 34–cysteine 45, cysteine 39–cysteine 54, cysteine 55–cysteine 66, cysteine 73–cysteine 84, cysteine 78–cysteine 95, cysteine 97–cysteine 106, cysteine 113–cysteine 124, cysteine 118–cysteine 133, cysteine 135–cysteine 144, cysteine 151–cysteine 162, cysteine 156–cysteine 171, cysteine 173–cysteine 182, cysteine 189–cysteine 200, cysteine 194–cysteine 209, cysteine 211–cysteine 220, cysteine 227–cysteine 238, cysteine 232–cysteine 247, cysteine 249–cysteine 258, cysteine 265–cysteine 276, cysteine 270–cysteine 285, cysteine 287–cysteine 297, cysteine 304–cysteine 315, cysteine 309–cysteine 324, cysteine 326–cysteine 335, cysteine 342–cysteine 353, cysteine 347–cysteine 382, cysteine 384–cysteine 393, cysteine 400–cysteine 411, cysteine 405–cysteine 420, cysteine 422–cysteine 437, cysteine 444–cysteine 455, cysteine 449–cysteine 468, and cysteine 470–cysteine 479. Asparagine 41 carries an N-linked (GlcNAc...) asparagine glycan. EGF-like domains lie at 69–107 and 109–145; these read LKDPCFSSPCQGIATCVKIPGEGNFLCQCPPGYSGLNCE and ATNSCGGNLCQHGGTCRKDPEHPVCICPPGYAGRFCE. In terms of domain architecture, EGF-like 4; calcium-binding spans 147–183; that stretch reads DHNECASSPCHNGAMCQDGINGYSCFCVPGYQGRHCD. One can recognise an EGF-like 5; calcium-binding domain in the interval 185-221; it reads EVDECVSDPCKNEAVCLNEIGRYTCVCPQEFSGVNCE. The region spanning 223–259 is the EGF-like 6; calcium-binding domain; that stretch reads EIDECRSQPCLHGATCQDAPGGYSCDCAPGFLGEHCE. EGF-like domains are found at residues 261–298, 300–336, 338–394, 396–438, and 440–480; these read SVNECESQPCLHGGLCVDGRNSYHCDCTGSGFTGMHCE, LIPLCWSKPCHNDATCEDTVDSYICHCRPGYTGALCE, DINE…IHCE, DVDE…ENCS, and ILLG…PLCE. One can recognise a Laminin G-like 1 domain in the interval 482-669; the sequence is VTTLSFGSNG…GLSSNVKAGC (188 aa). Residues asparagine 560 and asparagine 656 are each glycosylated (N-linked (GlcNAc...) asparagine). Disulfide bonds link cysteine 641-cysteine 669, cysteine 675-cysteine 686, cysteine 680-cysteine 695, and cysteine 697-cysteine 706. Residues 671-707 form the EGF-like 12 domain; the sequence is GKDWCESQPCQNRGRCINLWQGYQCECDRPYTGSNCL. Residues 713 to 884 form the Laminin G-like 2 domain; sequence GRFGQDDSTG…PILVNVTQGC (172 aa). N-linked (GlcNAc...) asparagine glycans are attached at residues asparagine 756 and asparagine 879. 6 disulfides stabilise this stretch: cysteine 850–cysteine 884, cysteine 890–cysteine 901, cysteine 895–cysteine 910, cysteine 912–cysteine 921, cysteine 927–cysteine 938, and cysteine 932–cysteine 947. 2 consecutive EGF-like domains span residues 886 to 922 and 923 to 959; these read GDNTCKSNPCHNGGVCHSLWDDFSCSCPTNTAGRACE and QVQWCQLSPCPPTAECQLLPQGFECIANAVFSGLSRE. The region spanning 950–1136 is the Laminin G-like 3 domain; that stretch reads NAVFSGLSRE…VSTNMVLTGC (187 aa). Residues asparagine 967, asparagine 974, and asparagine 999 are each glycosylated (N-linked (GlcNAc...) asparagine). Intrachain disulfides connect cysteine 1095-cysteine 1136, cysteine 1142-cysteine 1153, cysteine 1147-cysteine 1162, cysteine 1164-cysteine 1173, cysteine 1180-cysteine 1190, cysteine 1185-cysteine 1199, cysteine 1201-cysteine 1210, cysteine 1217-cysteine 1228, cysteine 1222-cysteine 1237, cysteine 1239-cysteine 1248, cysteine 1258-cysteine 1273, cysteine 1267-cysteine 1282, cysteine 1284-cysteine 1293, cysteine 1300-cysteine 1311, cysteine 1305-cysteine 1320, and cysteine 1322-cysteine 1331. Positions 1138–1174 constitute an EGF-like 15 domain; it reads PSNACHSSPCLHGGNCEDSYSSYRCACLSGWSGTHCE. The EGF-like 16; calcium-binding domain occupies 1176–1211; it reads NIDECFSSPCIHGNCSDGVAAYHCRCEPGYTGVNCE. N-linked (GlcNAc...) asparagine glycosylation occurs at asparagine 1189. EGF-like domains follow at residues 1213 to 1249 and 1254 to 1294; these read DVDNCKSHQCANGATCVPEAHGYSCLCFGNFTGRFCR and PSTV…EWCE. N-linked (GlcNAc...) asparagine glycosylation is found at asparagine 1242 and asparagine 1264. In terms of domain architecture, EGF-like 19; calcium-binding spans 1296–1332; it reads DINECASDPCINGGLCRDLVNRFLCICDVAFAGERCE. A helical transmembrane segment spans residues 1340–1360; the sequence is LLGIFTAVGSGTLALFFILLL. Topologically, residues 1361 to 1405 are cytoplasmic; sequence AGVASLIASNKRATQGTYSPSGQEKAGPRVEMWIRMPPPALERLI.

This sequence belongs to the Crumbs protein family. Component of a complex composed of PALS1, CRB1 and EPB41L5. Within the complex, interacts (via intracellular domain) with PALS1 and EPB41L5 (via FERM domain). Forms a complex with MPP4 and PALS1. Interacts with MPDZ/MUPP1 and MPP4. In terms of processing, glycosylated. As to expression, expressed in the kidney, lung, stomach and testis. Expressed in the brain. Expressed in the retina of the eye. Expressed in the outer nuclear layer, photoreceptor layer and inner nuclear layer of the retina. Expressed in Mueller cell radial processes in the inner nuclear layer, in apical processes sclerad to the external limiting membrane, and in the subapical region, adjacent to the adherens junction of retinal photoreceptors. In the brain, expressed in the granular layer of the cerebellum, the hippocampal dentate gyrus, the olfactory bulbs, the subventricular region lining the telencephalic ventricles and the rostral migratory stream. In terms of tissue distribution, ubiquitously expressed.

It localises to the apical cell membrane. The protein localises to the secreted. It is found in the cell projection. Its subcellular location is the cilium. The protein resides in the photoreceptor outer segment. It localises to the photoreceptor inner segment. The protein localises to the cytoplasm. It is found in the cell junction. Its subcellular location is the focal adhesion. In terms of biological role, plays a role in photoreceptor morphogenesis in the retina. May maintain cell polarization and adhesion. Its function is as follows. May play a role in epidermal tissue morphogenesis. May function in cell attachment for stratified epithelial organization. The polypeptide is Protein crumbs homolog 1 (Crb1) (Mus musculus (Mouse)).